The primary structure comprises 91 residues: MALRHKSAQKRHRQSLKRRMLNRSRKSTIKTFTKQAVAAATTGENLAAAQSKAESLIDKAAKGSTLHKNAAARKKSRLAKAINRVKAAQQS.

2 disordered regions span residues 1-26 and 67-91; these read MALR…RSRK and HKNA…AQQS.

It belongs to the bacterial ribosomal protein bS20 family.

Binds directly to 16S ribosomal RNA. The chain is Small ribosomal subunit protein bS20 from Deinococcus deserti (strain DSM 17065 / CIP 109153 / LMG 22923 / VCD115).